The chain runs to 343 residues: Anthranilate phosphoribosyltransferase (343 aa).

Residues glycine 84, 87–88 (GD), threonine 92, 94–97 (NIST), 112–120 (KHGNRGVSS), and serine 124 each bind 5-phospho-alpha-D-ribose 1-diphosphate. Glycine 84 is an anthranilate binding site. Position 96 (serine 96) interacts with Mg(2+). Asparagine 115 is a binding site for anthranilate. Arginine 170 is a binding site for anthranilate. Mg(2+) contacts are provided by aspartate 229 and glutamate 230.

It belongs to the anthranilate phosphoribosyltransferase family. In terms of assembly, homodimer. Mg(2+) is required as a cofactor.

It catalyses the reaction N-(5-phospho-beta-D-ribosyl)anthranilate + diphosphate = 5-phospho-alpha-D-ribose 1-diphosphate + anthranilate. The protein operates within amino-acid biosynthesis; L-tryptophan biosynthesis; L-tryptophan from chorismate: step 2/5. In terms of biological role, catalyzes the transfer of the phosphoribosyl group of 5-phosphorylribose-1-pyrophosphate (PRPP) to anthranilate to yield N-(5'-phosphoribosyl)-anthranilate (PRA). This Burkholderia pseudomallei (strain 1106a) protein is Anthranilate phosphoribosyltransferase.